A 251-amino-acid polypeptide reads, in one-letter code: tRNA-cytidine(32) 2-sulfurtransferase 2 (251 aa).

The short motif at 33–38 (SGGKDS) is the PP-loop motif element. Residues C108, C111, and C199 each coordinate [4Fe-4S] cluster.

It belongs to the TtcA family. As to quaternary structure, homodimer. The cofactor is Mg(2+). [4Fe-4S] cluster serves as cofactor.

It localises to the cytoplasm. It catalyses the reaction cytidine(32) in tRNA + S-sulfanyl-L-cysteinyl-[cysteine desulfurase] + AH2 + ATP = 2-thiocytidine(32) in tRNA + L-cysteinyl-[cysteine desulfurase] + A + AMP + diphosphate + H(+). The protein operates within tRNA modification. Its function is as follows. Catalyzes the ATP-dependent 2-thiolation of cytidine in position 32 of tRNA, to form 2-thiocytidine (s(2)C32). The sulfur atoms are provided by the cysteine/cysteine desulfurase (IscS) system. In Francisella tularensis subsp. tularensis (strain FSC 198), this protein is tRNA-cytidine(32) 2-sulfurtransferase 2.